The sequence spans 315 residues: MAGQHLPVPRLEGVSREQFMQHLYPQRKPLVLEGIDLGPCTSKWTVDYLSQVGGKKEVKIHVAAVAQMDFISKNFVYRTLPFDQLVQRAAEEKHKEFFVSEDEKYYLRSLGEDPRKDVADIRKQFPLLKGDIKFPEFFKEEQFFSSVFRISSPGLQLWTHYDVMDNLLIQVTGKKRVVLFSPRDAQYLYLKGTKSEVLNIDNPDLAKYPLFSKARRYECSLEAGDVLFIPALWFHNVISEEFGVGVNIFWKHLPSECYDKTDTYGNKDPTAASRAAQILDRALKTLAELPEEYRDFYARRMVLHIQDKAYSKNSE.

Residues 102 to 267 form the JmjC domain; it reads DEKYYLRSLG…YDKTDTYGNK (166 aa). Tyr106 contacts 2-oxoglutarate. Fe cation is bound by residues His160 and Asp162. The 2-oxoglutarate site is built by Asn166 and Lys175. A Fe cation-binding site is contributed by His235.

Belongs to the TYW5 family. In terms of assembly, homodimer. Fe(2+) serves as cofactor.

The enzyme catalyses 7-[(3S)-3-amino-3-carboxypropyl]wyosine(37) in tRNA(Phe) + 2-oxoglutarate + O2 = 7-(2-hydroxy-3-amino-3-carboxypropyl)wyosine(37) in tRNA(Phe) + succinate + CO2. It participates in tRNA modification; wybutosine-tRNA(Phe) biosynthesis. TRNA hydroxylase that acts as a component of the wybutosine biosynthesis pathway. Wybutosine is a hyper modified guanosine with a tricyclic base found at the 3'-position adjacent to the anticodon of eukaryotic phenylalanine tRNA. Catalyzes the hydroxylation of 7-(a-amino-a-carboxypropyl)wyosine (yW-72) into undermodified hydroxywybutosine (OHyW*). OHyW* being further transformed into hydroxywybutosine (OHyW) by LCMT2/TYW4. OHyW is a derivative of wybutosine found in higher eukaryotes. The protein is tRNA wybutosine-synthesizing protein 5 (TYW5) of Homo sapiens (Human).